We begin with the raw amino-acid sequence, 346 residues long: D-alanine--D-alanine ligase (346 aa).

The ATP-grasp domain maps to 125–325 (KRIWRSEGLP…YPALCLEVLR (201 aa)). Position 151 to 206 (151 to 206 (FAALGSPMIVKPDREGSTIGLTKVTQIEQCGAAYALAARHDAMVLCEQFVKGDEVT)) interacts with ATP. Mg(2+) is bound by residues D278, E292, and N294.

It belongs to the D-alanine--D-alanine ligase family. Requires Mg(2+) as cofactor. The cofactor is Mn(2+).

The protein resides in the cytoplasm. It catalyses the reaction 2 D-alanine + ATP = D-alanyl-D-alanine + ADP + phosphate + H(+). The protein operates within cell wall biogenesis; peptidoglycan biosynthesis. Cell wall formation. This chain is D-alanine--D-alanine ligase, found in Albidiferax ferrireducens (strain ATCC BAA-621 / DSM 15236 / T118) (Rhodoferax ferrireducens).